The sequence spans 534 residues: EH domain-containing protein 1 (534 aa).

The residue at position 1 (Met-1) is an N-acetylmethionine. One can recognise a Dynamin-type G domain in the interval 55–286; it reads FDNKPMVLLV…DLFKDIQSLP (232 aa). The interval 65 to 72 is G1 motif; sequence GQYSTGKT. An ATP-binding site is contributed by 65–72; that stretch reads GQYSTGKT. The tract at residues 91-92 is G2 motif; it reads EP. Positions 153–156 are G3 motif; it reads DTPG. A coiled-coil region spans residues 198–227; it reads DEFSEVIKALKNHEDKIRVVLNKADQIETQ. Positions 219–222 are G4 motif; the sequence is NKAD. Lys-220 contacts ATP. Ile-243 is a region of interest (G5 motif). Trp-258 contacts ATP. The EH domain occupies 444 to 532; that stretch reads DKPTYDEIFY…PHLVPPSKRR (89 aa). Phosphoserine is present on Ser-456. The region spanning 476–511 is the EF-hand domain; it reads LPNTVLGKIWKLADVDRDGLLDDEEFALANHLIKVK. Asp-489, Asp-491, Asp-493, and Glu-500 together coordinate Ca(2+).

It belongs to the TRAFAC class dynamin-like GTPase superfamily. Dynamin/Fzo/YdjA family. EHD subfamily. In terms of assembly, homooligomer, and heterooligomer with EHD2, EHD3 and EHD4, ATP-binding is required for heterooligomerization. Interacts (via EH domain) with MICALL1 (via NPF1 motif); the interaction is direct and recruits EHD1 to membranes. Interacts with RAB35; the interaction is indirect through MICALL1 and recruits EHD1 to membranes. Interacts (via EH domain) with PACSIN2 (via NPF motifs); regulates localization to tubular recycling endosome membranes. Interacts with PACSIN1. Interacts with RAB8A. Interacts with FER1L5 (via second C2 domain). Interacts with MYOF. Interacts with ZFYVE20. Interacts (via EH domain) with RAB11FIP2.

The protein resides in the recycling endosome membrane. It localises to the early endosome membrane. Its subcellular location is the cell membrane. It is found in the cell projection. The protein localises to the cilium membrane. Its function is as follows. ATP- and membrane-binding protein that controls membrane reorganization/tubulation upon ATP hydrolysis. Acts in early endocytic membrane fusion and membrane trafficking of recycling endosomes. Recruited to endosomal membranes upon nerve growth factor stimulation, indirectly regulates neurite outgrowth. Plays a role in myoblast fusion. Involved in the unidirectional retrograde dendritic transport of endocytosed BACE1 and in efficient sorting of BACE1 to axons implicating a function in neuronal APP processing. Plays a role in the formation of the ciliary vesicle (CV), an early step in cilium biogenesis. Proposed to be required for the fusion of distal appendage vesicles (DAVs) to form the CV by recruiting SNARE complex component SNAP29. Is required for recruitment of transition zone proteins CEP290, RPGRIP1L, TMEM67 and B9D2, and of IFT20 following DAV reorganization before Rab8-dependent ciliary membrane extension. Required for the loss of CCP110 form the mother centriole essential for the maturation of the basal body during ciliogenesis. The sequence is that of EH domain-containing protein 1 from Bos taurus (Bovine).